A 60-amino-acid polypeptide reads, in one-letter code: Large ribosomal subunit protein uL30 (60 aa).

This sequence belongs to the universal ribosomal protein uL30 family. As to quaternary structure, part of the 50S ribosomal subunit.

This Paraburkholderia phytofirmans (strain DSM 17436 / LMG 22146 / PsJN) (Burkholderia phytofirmans) protein is Large ribosomal subunit protein uL30.